Here is a 308-residue protein sequence, read N- to C-terminus: Ribonuclease Z (308 aa).

7 residues coordinate Zn(2+): H61, H63, D65, H66, H139, D210, and H268. The Proton acceptor role is filled by D65.

Belongs to the RNase Z family. As to quaternary structure, homodimer. The cofactor is Zn(2+).

It carries out the reaction Endonucleolytic cleavage of RNA, removing extra 3' nucleotides from tRNA precursor, generating 3' termini of tRNAs. A 3'-hydroxy group is left at the tRNA terminus and a 5'-phosphoryl group is left at the trailer molecule.. Zinc phosphodiesterase, which displays some tRNA 3'-processing endonuclease activity. Probably involved in tRNA maturation, by removing a 3'-trailer from precursor tRNA. This chain is Ribonuclease Z, found in Halobacterium salinarum (strain ATCC 700922 / JCM 11081 / NRC-1) (Halobacterium halobium).